The sequence spans 140 residues: ATP synthase epsilon chain (140 aa).

It belongs to the ATPase epsilon chain family. As to quaternary structure, F-type ATPases have 2 components, CF(1) - the catalytic core - and CF(0) - the membrane proton channel. CF(1) has five subunits: alpha(3), beta(3), gamma(1), delta(1), epsilon(1). CF(0) has three main subunits: a, b and c.

Its subcellular location is the cell inner membrane. Produces ATP from ADP in the presence of a proton gradient across the membrane. The protein is ATP synthase epsilon chain (atpC) of Vibrio alginolyticus.